We begin with the raw amino-acid sequence, 62 residues long: Large ribosomal subunit protein bL32 (62 aa).

The span at 1-18 shows a compositional bias: basic residues; that stretch reads MGVPKKRTSKMRRDRRRA. Residues 1–22 are disordered; sequence MGVPKKRTSKMRRDRRRAANNN.

Belongs to the bacterial ribosomal protein bL32 family.

This is Large ribosomal subunit protein bL32 from Myxococcus xanthus (strain DK1622).